The following is a 160-amino-acid chain: MAKSKNHTTHNQSRKWHRNGIKKPRSQRYESLKGVDPKFLRNMRFAKKHNKKGLKKMQANNAKAVSARAEAIKALVKPQAIKPKMPKGPKLKRLAFIAHPKLGKRIRSYMAKGQRLCQPKPKVQTKAGAKAPAKAQASAPAQAPKGAQAPKGAQAPVKAP.

Basic residues predominate over residues 1–26 (MAKSKNHTTHNQSRKWHRNGIKKPRS). Disordered stretches follow at residues 1-34 (MAKS…SLKG) and 115-160 (RLCQ…VKAP). Lysine 5 is subject to N6-methyllysine. Phosphoserine is present on serine 31. Lysine 33 is modified (N6-acetyllysine). Positions 126–160 (KAGAKAPAKAQASAPAQAPKGAQAPKGAQAPVKAP) are enriched in low complexity. Repeat copies occupy residues 127-134 (AGAKAPAK) and 135-142 (AQASAPAQ). Residues 127 to 142 (AGAKAPAKAQASAPAQ) are 2 X 8 AA tandem repeats of A-X-A-K-A-P-A-[KQ]. Serine 138 bears the Phosphoserine mark. Lysine 145 carries the N6-acetyllysine modification.

The protein belongs to the eukaryotic ribosomal protein eL29 family. As to quaternary structure, component of the large ribosomal subunit.

Its subcellular location is the cytoplasm. Its function is as follows. Component of the large ribosomal subunit. The ribosome is a large ribonucleoprotein complex responsible for the synthesis of proteins in the cell. The chain is Large ribosomal subunit protein eL29 (Rpl29) from Mus musculus (Mouse).